The sequence spans 467 residues: Chromosomal replication initiator protein DnaA (467 aa).

The segment at Met-1–Lys-87 is domain I, interacts with DnaA modulators. The segment at Lys-87–Ser-130 is domain II. The segment at Asn-131–Ala-347 is domain III, AAA+ region. Positions 175, 177, 178, and 179 each coordinate ATP. A domain IV, binds dsDNA region spans residues Asn-348–Ser-467.

This sequence belongs to the DnaA family. In terms of assembly, oligomerizes as a right-handed, spiral filament on DNA at oriC.

The protein resides in the cytoplasm. Functionally, plays an essential role in the initiation and regulation of chromosomal replication. ATP-DnaA binds to the origin of replication (oriC) to initiate formation of the DNA replication initiation complex once per cell cycle. Binds the DnaA box (a 9 base pair repeat at the origin) and separates the double-stranded (ds)DNA. Forms a right-handed helical filament on oriC DNA; dsDNA binds to the exterior of the filament while single-stranded (ss)DNA is stabiized in the filament's interior. The ATP-DnaA-oriC complex binds and stabilizes one strand of the AT-rich DNA unwinding element (DUE), permitting loading of DNA polymerase. After initiation quickly degrades to an ADP-DnaA complex that is not apt for DNA replication. Binds acidic phospholipids. The sequence is that of Chromosomal replication initiator protein DnaA from Vibrio cholerae serotype O1 (strain ATCC 39315 / El Tor Inaba N16961).